The primary structure comprises 321 residues: MFMYPYIVADIGGTNARFALVTGKKGNAFNLEQIQILNGSEFPRLQDAMQHYIDTLGGEKPKAACVAIAGPIDGDNARMTNLNWEFSQAAVKAEFGFDKYDTLNDFGALAVATSSLQADNLIEIKAGTMDPKGNKAILGPGTGLGVAGLACAGDSWLPIPSEGGHVNVAPATQLECEVIRAAMAEHGHVSAETFISGPGLVRLYRALATVRGETPKNYEPKDITAGALDGTDDLCKETLDLFCSFIGSLSGNLALTYGAKGGVYLAGGVLPRFIDYFKSSDFVKRFSEKGVMSHYVENIPVNLISYEYTAFVGAAAWLDQL.

9–14 (ADIGGT) contacts ATP.

The protein belongs to the bacterial glucokinase family.

The protein resides in the cytoplasm. The catalysed reaction is D-glucose + ATP = D-glucose 6-phosphate + ADP + H(+). The polypeptide is Glucokinase (Saccharophagus degradans (strain 2-40 / ATCC 43961 / DSM 17024)).